The following is a 654-amino-acid chain: tRNA uridine 5-carboxymethylaminomethyl modification enzyme MnmG (654 aa).

Residue 17 to 22 (GGGHAG) coordinates FAD. 289 to 303 (GPRYCPSIEDKIVKF) contacts NAD(+).

Belongs to the MnmG family. Homodimer. Heterotetramer of two MnmE and two MnmG subunits. It depends on FAD as a cofactor.

The protein resides in the cytoplasm. Its function is as follows. NAD-binding protein involved in the addition of a carboxymethylaminomethyl (cmnm) group at the wobble position (U34) of certain tRNAs, forming tRNA-cmnm(5)s(2)U34. The polypeptide is tRNA uridine 5-carboxymethylaminomethyl modification enzyme MnmG (Prochlorococcus marinus subsp. pastoris (strain CCMP1986 / NIES-2087 / MED4)).